Reading from the N-terminus, the 335-residue chain is MLGSKPRVHLYILPCASQQVSTMGDRGTSNHSEMTDFILAGFRVRPELHILLFLLFLFVYAMILLGNVGMMTIIMTDPRLNTPMYFFLGNLSFIDLFYSSVIEPKAMINFWSENKSISFAGCVAQLFLFALLIVTEGFLLAAMAYDRFIAICNPLLYSVQMSTRLCTQLVAGSYFCGCISSVIQTSMTFTLSFCASRAVDHFYCDSRPLQRLSCSDLFIHRMISFSLSCIIILPTIIVIIVSYMYIVSTVLKIHSTEGHKKAFSTCSSHLGVVSVLYGAVFFMYLTPDRFPELSKVASLCYSLVTPMLNPLIYSLRNKDVQEALKKFLEKKNIIL.

Residues 1-50 (MLGSKPRVHLYILPCASQQVSTMGDRGTSNHSEMTDFILAGFRVRPELHI) are Extracellular-facing. N-linked (GlcNAc...) asparagine glycosylation is present at Asn30. A helical transmembrane segment spans residues 51–71 (LLFLLFLFVYAMILLGNVGMM). The Cytoplasmic segment spans residues 72–79 (TIIMTDPR). A helical membrane pass occupies residues 80–100 (LNTPMYFFLGNLSFIDLFYSS). Residues 101–124 (VIEPKAMINFWSENKSISFAGCVA) lie on the Extracellular side of the membrane. Asn114 is a glycosylation site (N-linked (GlcNAc...) asparagine). An intrachain disulfide couples Cys122 to Cys214. Residues 125-145 (QLFLFALLIVTEGFLLAAMAY) form a helical membrane-spanning segment. Over 146–164 (DRFIAICNPLLYSVQMSTR) the chain is Cytoplasmic. The chain crosses the membrane as a helical span at residues 165 to 185 (LCTQLVAGSYFCGCISSVIQT). Residues 186-222 (SMTFTLSFCASRAVDHFYCDSRPLQRLSCSDLFIHRM) lie on the Extracellular side of the membrane. The chain crosses the membrane as a helical span at residues 223–242 (ISFSLSCIIILPTIIVIIVS). The Cytoplasmic segment spans residues 243–262 (YMYIVSTVLKIHSTEGHKKA). The chain crosses the membrane as a helical span at residues 263 to 283 (FSTCSSHLGVVSVLYGAVFFM). At 284 to 296 (YLTPDRFPELSKV) the chain is on the extracellular side. The Cytoplasmic portion of the chain corresponds to 316–335 (RNKDVQEALKKFLEKKNIIL).

Belongs to the G-protein coupled receptor 1 family.

The protein localises to the cell membrane. In terms of biological role, odorant receptor. This is Olfactory receptor 9K2 (OR9K2) from Homo sapiens (Human).